The chain runs to 102 residues: Small ribosomal subunit protein uS10 (102 aa).

Belongs to the universal ribosomal protein uS10 family. Part of the 30S ribosomal subunit.

Involved in the binding of tRNA to the ribosomes. The polypeptide is Small ribosomal subunit protein uS10 (Cupriavidus metallidurans (strain ATCC 43123 / DSM 2839 / NBRC 102507 / CH34) (Ralstonia metallidurans)).